Reading from the N-terminus, the 331-residue chain is UPF0194 membrane protein YbhG (331 aa).

The signal sequence occupies residues 1–19 (MKKPVVIGLAIAAIVAVIA). Residues 107–208 (EEIAQAAAAV…LDLQDTTLIA (102 aa)) adopt a coiled-coil conformation.

Belongs to the UPF0194 family.

The protein localises to the periplasm. This Salmonella heidelberg (strain SL476) protein is UPF0194 membrane protein YbhG.